The primary structure comprises 208 residues: Ribosomal RNA small subunit methyltransferase G (208 aa).

S-adenosyl-L-methionine contacts are provided by residues glycine 76, leucine 81, 127-128 (VE), and arginine 142.

It belongs to the methyltransferase superfamily. RNA methyltransferase RsmG family.

The protein resides in the cytoplasm. It catalyses the reaction guanosine(527) in 16S rRNA + S-adenosyl-L-methionine = N(7)-methylguanosine(527) in 16S rRNA + S-adenosyl-L-homocysteine. Functionally, specifically methylates the N7 position of guanine in position 527 of 16S rRNA. The protein is Ribosomal RNA small subunit methyltransferase G of Legionella pneumophila (strain Corby).